The following is a 133-amino-acid chain: S-protein homolog 9 (133 aa).

The first 20 residues, 1–20 (MNRLSCFLLVIGLCIGLSNA), serve as a signal peptide directing secretion.

This sequence belongs to the plant self-incompatibility (S1) protein family.

It localises to the secreted. This chain is S-protein homolog 9, found in Arabidopsis thaliana (Mouse-ear cress).